We begin with the raw amino-acid sequence, 414 residues long: Serine hydroxymethyltransferase (414 aa).

(6S)-5,6,7,8-tetrahydrofolate is bound by residues L121 and 125–127 (GHL). N6-(pyridoxal phosphate)lysine is present on K230.

This sequence belongs to the SHMT family. As to quaternary structure, homodimer. Pyridoxal 5'-phosphate serves as cofactor.

Its subcellular location is the cytoplasm. The enzyme catalyses (6R)-5,10-methylene-5,6,7,8-tetrahydrofolate + glycine + H2O = (6S)-5,6,7,8-tetrahydrofolate + L-serine. Its pathway is one-carbon metabolism; tetrahydrofolate interconversion. The protein operates within amino-acid biosynthesis; glycine biosynthesis; glycine from L-serine: step 1/1. Catalyzes the reversible interconversion of serine and glycine with tetrahydrofolate (THF) serving as the one-carbon carrier. This reaction serves as the major source of one-carbon groups required for the biosynthesis of purines, thymidylate, methionine, and other important biomolecules. Also exhibits THF-independent aldolase activity toward beta-hydroxyamino acids, producing glycine and aldehydes, via a retro-aldol mechanism. The protein is Serine hydroxymethyltransferase of Acidithiobacillus ferrooxidans (strain ATCC 23270 / DSM 14882 / CIP 104768 / NCIMB 8455) (Ferrobacillus ferrooxidans (strain ATCC 23270)).